The following is a 544-amino-acid chain: Chaperonin GroEL 1 (544 aa).

ATP-binding positions include 29-32, 86-90, Gly413, 479-481, and Asp495; these read TLGP, DGTTT, and NAA.

This sequence belongs to the chaperonin (HSP60) family. Forms a cylinder of 14 subunits composed of two heptameric rings stacked back-to-back. Interacts with the co-chaperonin GroES.

It localises to the cytoplasm. It catalyses the reaction ATP + H2O + a folded polypeptide = ADP + phosphate + an unfolded polypeptide.. Together with its co-chaperonin GroES, plays an essential role in assisting protein folding. The GroEL-GroES system forms a nano-cage that allows encapsulation of the non-native substrate proteins and provides a physical environment optimized to promote and accelerate protein folding. The chain is Chaperonin GroEL 1 from Parasynechococcus marenigrum (strain WH8102).